A 91-amino-acid polypeptide reads, in one-letter code: Small ribosomal subunit protein bS16 (91 aa).

The protein belongs to the bacterial ribosomal protein bS16 family.

The sequence is that of Small ribosomal subunit protein bS16 from Enterococcus faecalis (strain ATCC 700802 / V583).